The primary structure comprises 311 residues: Aspartate carbamoyltransferase catalytic subunit (311 aa).

Residues arginine 57 and threonine 58 each coordinate carbamoyl phosphate. Lysine 86 is a binding site for L-aspartate. Arginine 107, histidine 135, and glutamine 138 together coordinate carbamoyl phosphate. L-aspartate-binding residues include arginine 168 and arginine 230. Carbamoyl phosphate is bound by residues leucine 269 and proline 270.

It belongs to the aspartate/ornithine carbamoyltransferase superfamily. ATCase family. Heterooligomer of catalytic and regulatory chains.

The enzyme catalyses carbamoyl phosphate + L-aspartate = N-carbamoyl-L-aspartate + phosphate + H(+). Its pathway is pyrimidine metabolism; UMP biosynthesis via de novo pathway; (S)-dihydroorotate from bicarbonate: step 2/3. Catalyzes the condensation of carbamoyl phosphate and aspartate to form carbamoyl aspartate and inorganic phosphate, the committed step in the de novo pyrimidine nucleotide biosynthesis pathway. The chain is Aspartate carbamoyltransferase catalytic subunit from Staphylothermus marinus (strain ATCC 43588 / DSM 3639 / JCM 9404 / F1).